Reading from the N-terminus, the 422-residue chain is Isocitrate dehydrogenase [NADP] (422 aa).

Position 94 (Thr94) interacts with NADP(+). Residues Ser103, Asn105, Arg109, Arg119, and Arg143 each coordinate D-threo-isocitrate. Asp310 provides a ligand contact to Mg(2+). NADP(+)-binding positions include 344 to 350, Asn357, Tyr396, and Arg400; that span reads HGTAPKY.

This sequence belongs to the isocitrate and isopropylmalate dehydrogenases family. Homodimer. The cofactor is Mg(2+). Mn(2+) is required as a cofactor.

It catalyses the reaction D-threo-isocitrate + NADP(+) = 2-oxoglutarate + CO2 + NADPH. In terms of biological role, catalyzes the oxidative decarboxylation of isocitrate to 2-oxoglutarate and carbon dioxide with the concomitant reduction of NADP(+). The chain is Isocitrate dehydrogenase [NADP] (icd) from Staphylococcus aureus (strain COL).